Consider the following 229-residue polypeptide: Uracil-DNA glycosylase (229 aa).

Catalysis depends on Asp64, which acts as the Proton acceptor.

The protein belongs to the uracil-DNA glycosylase (UDG) superfamily. UNG family.

The protein localises to the cytoplasm. It catalyses the reaction Hydrolyzes single-stranded DNA or mismatched double-stranded DNA and polynucleotides, releasing free uracil.. Its function is as follows. Excises uracil residues from the DNA which can arise as a result of misincorporation of dUMP residues by DNA polymerase or due to deamination of cytosine. The protein is Uracil-DNA glycosylase of Klebsiella pneumoniae subsp. pneumoniae (strain ATCC 700721 / MGH 78578).